The sequence spans 176 residues: Ribosome maturation factor RimP (176 aa).

The protein belongs to the RimP family.

It is found in the cytoplasm. Functionally, required for maturation of 30S ribosomal subunits. The chain is Ribosome maturation factor RimP from Mycolicibacterium vanbaalenii (strain DSM 7251 / JCM 13017 / BCRC 16820 / KCTC 9966 / NRRL B-24157 / PYR-1) (Mycobacterium vanbaalenii).